We begin with the raw amino-acid sequence, 161 residues long: Cyclic pyranopterin monophosphate synthase (161 aa).

Substrate is bound by residues 76 to 78 (MCH) and 114 to 115 (ME). The active site involves Asp129.

This sequence belongs to the MoaC family. As to quaternary structure, homohexamer; trimer of dimers.

It carries out the reaction (8S)-3',8-cyclo-7,8-dihydroguanosine 5'-triphosphate = cyclic pyranopterin phosphate + diphosphate. The protein operates within cofactor biosynthesis; molybdopterin biosynthesis. Functionally, catalyzes the conversion of (8S)-3',8-cyclo-7,8-dihydroguanosine 5'-triphosphate to cyclic pyranopterin monophosphate (cPMP). The protein is Cyclic pyranopterin monophosphate synthase of Clostridium acetobutylicum (strain ATCC 824 / DSM 792 / JCM 1419 / IAM 19013 / LMG 5710 / NBRC 13948 / NRRL B-527 / VKM B-1787 / 2291 / W).